A 141-amino-acid chain; its full sequence is Molybdopterin synthase catalytic subunit 2 (141 aa).

Substrate-binding positions include Met-37–Arg-39, His-103–Arg-104, Lys-119, and Lys-126–Gln-128.

This sequence belongs to the MoaE family. In terms of assembly, heterotetramer of 2 MoaD subunits and 2 MoaE subunits. Also stable as homodimer. The enzyme changes between these two forms during catalysis.

The catalysed reaction is 2 [molybdopterin-synthase sulfur-carrier protein]-C-terminal-Gly-aminoethanethioate + cyclic pyranopterin phosphate + H2O = molybdopterin + 2 [molybdopterin-synthase sulfur-carrier protein]-C-terminal Gly-Gly + 2 H(+). Its pathway is cofactor biosynthesis; molybdopterin biosynthesis. Converts molybdopterin precursor Z into molybdopterin. This requires the incorporation of two sulfur atoms into precursor Z to generate a dithiolene group. The sulfur is provided by MoaD. The chain is Molybdopterin synthase catalytic subunit 2 (moaE2) from Mycobacterium tuberculosis (strain CDC 1551 / Oshkosh).